Consider the following 217-residue polypeptide: Glycine betaine/carnitine/choline transport system permease protein OpuCB (217 aa).

Residues Thr19–Leu198 enclose the ABC transmembrane type-1 domain. 6 helical membrane passes run Leu23–Ala43, Gly52–Ile74, Ala84–Tyr101, Leu128–Tyr148, Ile150–Ile170, and Ile180–Val200.

The protein belongs to the binding-protein-dependent transport system permease family. CysTW subfamily. The complex is composed of two ATP-binding proteins (OpuCA), two transmembrane proteins (OpuCB and OpuCD) and a solute-binding protein (OpuCC).

The protein localises to the cell membrane. Its function is as follows. Involved in a high affinity multicomponent binding-protein-dependent transport system for glycine betaine, carnitine and choline; probably responsible for the translocation of the substrate across the membrane. The polypeptide is Glycine betaine/carnitine/choline transport system permease protein OpuCB (opuCB) (Bacillus subtilis (strain 168)).